The sequence spans 387 residues: 3-hydroxy-D-aspartate aldolase (387 aa).

At lysine 62 the chain carries N6-(pyridoxal phosphate)lysine. Pyridoxal 5'-phosphate contacts are provided by residues glutamine 85, threonine 238, 256 to 257, and tyrosine 265; that span reads GS. The Mg(2+) site is built by histidine 355 and aspartate 357.

This sequence belongs to the DSD1 family. Homodimer. Pyridoxal 5'-phosphate is required as a cofactor. Requires Mg(2+) as cofactor.

The catalysed reaction is (3S)-3-hydroxy-D-aspartate = glyoxylate + glycine. It carries out the reaction (3R)-3-hydroxy-D-aspartate = glyoxylate + glycine. Catalyzes the condensation of glyoxylate and glycine into (2R,3S)-beta-hydroxyaspartate ((3S)-3-hydroxy-D-aspartate). Is essential for the growth of P.denitrificans in the presence of glycolate and glyoxylate since it functions in glyoxylate assimilation via the beta-hydroxyaspartate cycle (BHAC). Is also able to catalyze the reverse reaction in vitro, i.e. the cleavage of (3S)-3-hydroxy-D-aspartate, and that of D-threonine to a lesser extent. This Paracoccus denitrificans (strain Pd 1222) protein is 3-hydroxy-D-aspartate aldolase.